The chain runs to 84 residues: Cell division topological specificity factor (84 aa).

This sequence belongs to the MinE family.

Prevents the cell division inhibition by proteins MinC and MinD at internal division sites while permitting inhibition at polar sites. This ensures cell division at the proper site by restricting the formation of a division septum at the midpoint of the long axis of the cell. The protein is Cell division topological specificity factor of Cupriavidus taiwanensis (strain DSM 17343 / BCRC 17206 / CCUG 44338 / CIP 107171 / LMG 19424 / R1) (Ralstonia taiwanensis (strain LMG 19424)).